The following is a 213-amino-acid chain: 3,4-dihydroxy-2-butanone 4-phosphate synthase (213 aa).

D-ribulose 5-phosphate contacts are provided by residues 37–38 (RE), Asp-42, 150–154 (RAGHT), and Glu-174. Mg(2+) is bound at residue Glu-38. His-153 contributes to the Mg(2+) binding site.

The protein belongs to the DHBP synthase family. In terms of assembly, homodimer. It depends on Mg(2+) as a cofactor. Mn(2+) is required as a cofactor.

The catalysed reaction is D-ribulose 5-phosphate = (2S)-2-hydroxy-3-oxobutyl phosphate + formate + H(+). The protein operates within cofactor biosynthesis; riboflavin biosynthesis; 2-hydroxy-3-oxobutyl phosphate from D-ribulose 5-phosphate: step 1/1. Its function is as follows. Catalyzes the conversion of D-ribulose 5-phosphate to formate and 3,4-dihydroxy-2-butanone 4-phosphate. This Wigglesworthia glossinidia brevipalpis protein is 3,4-dihydroxy-2-butanone 4-phosphate synthase.